The primary structure comprises 296 residues: NAD kinase (296 aa).

Asp73 (proton acceptor) is an active-site residue. NAD(+)-binding positions include 73–74 (DG), Lys78, 151–152 (NE), Arg178, Asp180, and 191–196 (TAHAMS).

Belongs to the NAD kinase family. A divalent metal cation serves as cofactor.

It is found in the cytoplasm. The catalysed reaction is NAD(+) + ATP = ADP + NADP(+) + H(+). Functionally, involved in the regulation of the intracellular balance of NAD and NADP, and is a key enzyme in the biosynthesis of NADP. Catalyzes specifically the phosphorylation on 2'-hydroxyl of the adenosine moiety of NAD to yield NADP. This Francisella tularensis subsp. mediasiatica (strain FSC147) protein is NAD kinase.